We begin with the raw amino-acid sequence, 243 residues long: tRNA pseudouridine synthase A (243 aa).

D54 functions as the Nucleophile in the catalytic mechanism. Position 112 (Y112) interacts with substrate.

It belongs to the tRNA pseudouridine synthase TruA family. Homodimer.

The catalysed reaction is uridine(38/39/40) in tRNA = pseudouridine(38/39/40) in tRNA. In terms of biological role, formation of pseudouridine at positions 38, 39 and 40 in the anticodon stem and loop of transfer RNAs. The protein is tRNA pseudouridine synthase A of Onion yellows phytoplasma (strain OY-M).